Consider the following 389-residue polypeptide: MVTVDEVRKAQRAQGPATIMAIGTATPPNCVDQSTYPDYYFRITNSEHMTDLKEKFKRMCDKSMIKKRYMYLTEEILKENPNVCAYMAPSLDTRQDMVVVEVPRLGKAATEAIKEWGQPKSKITHLVFCTTSGVDMPGADYRLTKLLGLRPSVKRLMMYQQGCFAGGTVLRLAKDLAENNKGARVLVVCSEITAVTFRGPSDTHLDSLVGQALFGDGAAAIIIGADPIPEIEKPMFELVSTAQTILPDSDGSIDGHLREAGLTFHLLKDVPGLISKNIQKSLTEAFKPLGISDWNSIFWIAHPGGPAILDQVEEKLGLKPEKLRATRHVLSEYGNMSSACVLFILDEMRKKSAEDGLETAGEGLEWGVLFGFGPGLTVETVVLHSVAAA.

Residue cysteine 163 is part of the active site.

It belongs to the thiolase-like superfamily. Chalcone/stilbene synthases family.

The catalysed reaction is (E)-4-coumaroyl-CoA + 3 malonyl-CoA + 3 H(+) = 2',4,4',6'-tetrahydroxychalcone + 3 CO2 + 4 CoA. Its pathway is secondary metabolite biosynthesis; flavonoid biosynthesis. In terms of biological role, the primary product of this enzyme is 4,2',4',6'-tetrahydroxychalcone (also termed naringenin-chalcone or chalcone) which can under specific conditions spontaneously isomerize into naringenin. This Citrus sinensis (Sweet orange) protein is Chalcone synthase 1 (CHS1).